The following is a 115-amino-acid chain: MQHLVFVYGTLRHGESNHTYLQHSQLLGQFETKPEYALYDLGAYPGLVEGHQSVHGEVYLVDEHTLAQLDILEDVPVEYRRDTIETPFGTAWIYIYQETHRLHSLIDSGDWCQRV.

Position 8-11 (8-11 (YGTL)) interacts with substrate. E73 acts as the Proton acceptor in catalysis.

Belongs to the gamma-glutamylcyclotransferase family.

Putative gamma-glutamylcyclotransferase. In Vibrio cholerae serotype O1 (strain ATCC 39315 / El Tor Inaba N16961), this protein is Putative gamma-glutamylcyclotransferase VC_2546.